We begin with the raw amino-acid sequence, 477 residues long: MEWEPVIGLEVHVQLRTQSKIFSGAATAYGAEPNTQACAIDLGLPGVLPVLNKEAVKLAVCFGLSVNASIPPYSIFARKNYFYPDLPKGYQISQYNFPIVQNGHLDIENEDGTTKRIGITRAHLEEDAGKSFHEGMQGYSGIDFNRAGTPLLEIVSEPDIRSAQEAVAYLKALHSLVRYIGVSDANMQEGAFRCDVNISLRPKGEEKFGTRAEIKNVNSFRFVERAILFEINRQKEILENGGTIVQETRLYDAVQDETRSMRTKEEAHDYRYFPDPDLLPVEIGPEFIEAVKNQLPELPWEKRKRFAASYQLSNYDVKLLTTQIEIANYFETVLKIDKTIPPKLAANWINGDLAAALNKNNLSITQSPINAEQLAGLLHRIADNTLSGSMGKQVFETMWGGEGDADTIIERHGLKQITDTEALEKIIDEVIENNPTQVEQYRSGKDKLIAFFVGQVMKATKGKANPQQVNELFKKKL.

It belongs to the GatB/GatE family. GatB subfamily. As to quaternary structure, heterotrimer of A, B and C subunits.

The catalysed reaction is L-glutamyl-tRNA(Gln) + L-glutamine + ATP + H2O = L-glutaminyl-tRNA(Gln) + L-glutamate + ADP + phosphate + H(+). It catalyses the reaction L-aspartyl-tRNA(Asn) + L-glutamine + ATP + H2O = L-asparaginyl-tRNA(Asn) + L-glutamate + ADP + phosphate + 2 H(+). Allows the formation of correctly charged Asn-tRNA(Asn) or Gln-tRNA(Gln) through the transamidation of misacylated Asp-tRNA(Asn) or Glu-tRNA(Gln) in organisms which lack either or both of asparaginyl-tRNA or glutaminyl-tRNA synthetases. The reaction takes place in the presence of glutamine and ATP through an activated phospho-Asp-tRNA(Asn) or phospho-Glu-tRNA(Gln). In Coxiella burnetii (strain CbuK_Q154) (Coxiella burnetii (strain Q154)), this protein is Aspartyl/glutamyl-tRNA(Asn/Gln) amidotransferase subunit B.